A 227-amino-acid polypeptide reads, in one-letter code: Pre-hexon-linking protein VIII (227 aa).

Thr-64 carries the post-translational modification Phosphothreonine; by host. Positions 112–157 (FRHRVRSPGQGITHLTIRGRGIQLNDESVSSSLGLRPDGTFQIGGA) are excised as a propeptide. A phosphoserine; by host mark is found at Ser-118 and Ser-174.

It belongs to the adenoviridae hexon-linking protein family. As to quaternary structure, interacts with the peripentonal hexons as well as the hexons in the facets. Part of a complex composed of the core-capsid bridging protein, the endosome lysis protein VI and the hexon-linking protein VIII; these interactions bridge the virus core to the capsid. Cleaved by the viral protease during virion maturation. May cause the middle segment to be shed from the capsid.

The protein resides in the virion. It is found in the host nucleus. Functionally, structural component of the virion that acts as a cement protein on the capsid interior and which glue the peripentonal hexons and group-of-nine hexons together. The protein is Pre-hexon-linking protein VIII of Human adenovirus C serotype 5 (HAdV-5).